Reading from the N-terminus, the 289-residue chain is Phenylalanine-4-hydroxylase (289 aa).

Fe cation-binding residues include His144, His149, and Glu189.

It belongs to the biopterin-dependent aromatic amino acid hydroxylase family. Fe(2+) is required as a cofactor.

The catalysed reaction is (6R)-L-erythro-5,6,7,8-tetrahydrobiopterin + L-phenylalanine + O2 = (4aS,6R)-4a-hydroxy-L-erythro-5,6,7,8-tetrahydrobiopterin + L-tyrosine. The protein operates within amino-acid degradation; L-phenylalanine degradation; acetoacetate and fumarate from L-phenylalanine: step 1/6. The sequence is that of Phenylalanine-4-hydroxylase (phhA) from Vibrio cholerae serotype O1 (strain ATCC 39315 / El Tor Inaba N16961).